Reading from the N-terminus, the 142-residue chain is 2-aminomuconate deaminase (142 aa).

This sequence belongs to the 2-aminomuconate deaminase family. Homotetramer.

It catalyses the reaction (2Z,4E)-2-aminomuconate + H2O = (3E)-2-oxohex-3-enedioate + NH4(+). With respect to regulation, slightly inhibited by Pb(2+), Hg(+) and Cu(2+). Its function is as follows. Involved in the modified meta-cleavage pathway for the 2-aminophenol catabolism. Only active toward 2-aminomuconic acid. The chain is 2-aminomuconate deaminase (amnD) from Pseudomonas sp.